Here is a 501-residue protein sequence, read N- to C-terminus: MPSTNASRKGQEKPREIVDAAEDYAKERYGISSMIQSQEKPDRVLVRVKDLTVQKADDVVWVRARVHTSRAKGKQCFLVLRQQQFNVQALVAVGDHASKQMVKFAANINKESIIDVEGVVRKVNQKIGSCTQQDVELHVQKIYVISLAEPRLPLQLDDAIRPEVEGEEDGRATVNQDTRLDNRVIDLRTSTSQAIFRLQSGICHLFRETLINKGFVEIQTPKIISAASEGGANVFTVSYFKNNAYLAQSPQLYKQMCICADFEKVFCIGPVFRAEDSNTHRHLTEFVGLDIEMAFNYHYHEVVEEIADTLVQIFKGLQERFQTEIQTVSKQFPCEPFKFLEPTLRLEYCEALAMLREAGVEMDDEEDLSTPNEKLLGRLVKEKYDTDFYVLDKYPLAVRPFYTMPDPRNPKQSNSYDMFMRGEEILSGAQRIHDPQLLTERALHHGIDLEKIKAYIDSFRFGAPPHAGGGIGLERVTMLFLGLHNVRQTSMFPRDPKRLTP.

T52 is subject to Phosphothreonine. An N6-acetyllysine modification is found at K74. Residue E229 participates in L-aspartate binding. Position 249 is a phosphoserine (S249). Residues 251-254 (QLYK) are aspartate. R273 is an L-aspartate binding site. ATP is bound by residues 273–275 (RAE) and 281–283 (RHL). N6-acetyllysine is present on K374. An ATP-binding site is contributed by E424. L-aspartate is bound by residues S427 and R431. 472–475 (GLER) contributes to the ATP binding site.

This sequence belongs to the class-II aminoacyl-tRNA synthetase family. Type 2 subfamily. Homodimer. Part of a multisubunit complex that groups tRNA ligases for Arg (RARS1), Asp (DARS1), Gln (QARS1), Ile (IARS1), Leu (LARS1), Lys (KARS1), Met (MARS1) the bifunctional ligase for Glu and Pro (EPRS1) and the auxiliary subunits AIMP1/p43, AIMP2/p38 and EEF1E1/p18.

Its subcellular location is the cytoplasm. It catalyses the reaction tRNA(Asp) + L-aspartate + ATP = L-aspartyl-tRNA(Asp) + AMP + diphosphate. Its function is as follows. Catalyzes the specific attachment of an amino acid to its cognate tRNA in a 2 step reaction: the amino acid (AA) is first activated by ATP to form AA-AMP and then transferred to the acceptor end of the tRNA. The protein is Aspartate--tRNA ligase, cytoplasmic (Dars1) of Mus musculus (Mouse).